A 141-amino-acid chain; its full sequence is Large ribosomal subunit protein uL11 (141 aa).

This sequence belongs to the universal ribosomal protein uL11 family. Part of the ribosomal stalk of the 50S ribosomal subunit. Interacts with L10 and the large rRNA to form the base of the stalk. L10 forms an elongated spine to which L12 dimers bind in a sequential fashion forming a multimeric L10(L12)X complex. In terms of processing, one or more lysine residues are methylated.

Forms part of the ribosomal stalk which helps the ribosome interact with GTP-bound translation factors. In Moorella thermoacetica (strain ATCC 39073 / JCM 9320), this protein is Large ribosomal subunit protein uL11.